The chain runs to 562 residues: MENSMNNRGHGHNQEHADNLPESKRQKLPALASVIVEAVKVDSLQRLCSSLEPLFRRIVSEEVERAISRLENSKSTSRSTEPNKIQGLDGRNLQLRFRTRMPPHLFTGGKVEGEQGSAIHVVLIDANTGNVIQTGEESMTKLNIVVLDGDFNDEDDKDWTREHFESFEVKEREGKRPILTGDRHVIIKEGVGTLGKLTFTDNSSWIRSRKFRLGVKPATGFHIREAKTEPFAVKDHRGELYKKHYPPVLHDEVWRLDKIAKDGALHKKLLKSNIVTVEDFLQILMKDPQKLRSLLGSGMSNRMWDNTVEHAKTCVLGGKLYAYYTDQTHQTAVVFNHIYEFQGLIANGHFLSSESLNHDQKISADTLVKTAYENWHKVVEYGGKLLNCLPVAKKGIKSLPEPKMAQNHQTQQKALQCQQTVNGYSSDPQHLIEYPFVQQPCYQLRDYTSMESSSVSGSYNGGLEDIFTEEIRARSSEMLETDNMQRLLKTFGISGGFGNRDESIYGFSDQYEAQIDKGYMREGGRGAGKAVVGWLKLKAALRWGIFIRKKAAERRPQIVEID.

A disordered region spans residues Met1–Glu22. Residues Met5 to Lys84 are calmodulin-binding. Basic and acidic residues predominate over residues His12–Glu22. Positions Glu154–Asn273 are DNA-binding.

Belongs to the plant ACBP60 protein family. In terms of assembly, interacts with calmodulin (CaM).

The protein localises to the nucleus. Transcription activator that binds DNA in a sequence-specific manner, likely 5'-GAAATTTTGG-3', to promote the expression of target genes. This Arabidopsis thaliana (Mouse-ear cress) protein is Calmodulin-binding protein 60 F.